The primary structure comprises 705 residues: Translation initiation factor IF-2 (705 aa).

Residues 40–124 are disordered; the sequence is DDQIKALDKK…QPAAPKEIPS (85 aa). Basic and acidic residues predominate over residues 41–58; that stretch reads DQIKALDKKFKKEQKNDN. Residues 59–77 show a composition bias toward low complexity; that stretch reads KQSTQNNHQKSNNQNQNKG. Residues 94 to 108 show a composition bias toward basic residues; sequence KGNKKNNRNNKKNNK. One can recognise a tr-type G domain in the interval 207–376; it reads ERPAVVTIMG…GLVAEVQELK (170 aa). The interval 216-223 is G1; that stretch reads GHVDHGKT. 216 to 223 provides a ligand contact to GTP; it reads GHVDHGKT. The segment at 241–245 is G2; sequence GITQH. A G3 region spans residues 262–265; that stretch reads DTPG. GTP is bound by residues 262 to 266 and 316 to 319; these read DTPGH and NKID. A G4 region spans residues 316–319; sequence NKID. The tract at residues 352-354 is G5; that stretch reads SAL.

This sequence belongs to the TRAFAC class translation factor GTPase superfamily. Classic translation factor GTPase family. IF-2 subfamily.

The protein resides in the cytoplasm. In terms of biological role, one of the essential components for the initiation of protein synthesis. Protects formylmethionyl-tRNA from spontaneous hydrolysis and promotes its binding to the 30S ribosomal subunits. Also involved in the hydrolysis of GTP during the formation of the 70S ribosomal complex. This Staphylococcus aureus (strain MSSA476) protein is Translation initiation factor IF-2.